The following is an 85-amino-acid chain: Large ribosomal subunit protein bL27 (85 aa).

This sequence belongs to the bacterial ribosomal protein bL27 family.

The polypeptide is Large ribosomal subunit protein bL27 (Pseudomonas aeruginosa (strain LESB58)).